Consider the following 386-residue polypeptide: Large ribosomal subunit protein uL4 (386 aa).

The span at valine 341 to arginine 357 shows a compositional bias: basic and acidic residues. The disordered stretch occupies residues valine 341–lysine 386. The span at glycine 369–lysine 386 shows a compositional bias: basic residues.

Belongs to the universal ribosomal protein uL4 family.

This Urechis caupo (Innkeeper worm) protein is Large ribosomal subunit protein uL4 (RPL4).